Consider the following 114-residue polypeptide: Flagellar hook-basal body complex protein FliE (114 aa).

Belongs to the FliE family.

It localises to the bacterial flagellum basal body. This chain is Flagellar hook-basal body complex protein FliE, found in Desulfitobacterium hafniense (strain Y51).